Consider the following 260-residue polypeptide: Triosephosphate isomerase (260 aa).

Residue 10–12 (NWK) participates in substrate binding. Catalysis depends on H100, which acts as the Electrophile. Catalysis depends on E172, which acts as the Proton acceptor. Residues G178, S218, and 239–240 (GG) each bind substrate.

This sequence belongs to the triosephosphate isomerase family. As to quaternary structure, homodimer.

The protein resides in the cytoplasm. It catalyses the reaction D-glyceraldehyde 3-phosphate = dihydroxyacetone phosphate. It participates in carbohydrate biosynthesis; gluconeogenesis. It functions in the pathway carbohydrate degradation; glycolysis; D-glyceraldehyde 3-phosphate from glycerone phosphate: step 1/1. Its function is as follows. Involved in the gluconeogenesis. Catalyzes stereospecifically the conversion of dihydroxyacetone phosphate (DHAP) to D-glyceraldehyde-3-phosphate (G3P). This chain is Triosephosphate isomerase, found in Corynebacterium diphtheriae (strain ATCC 700971 / NCTC 13129 / Biotype gravis).